Here is a 213-residue protein sequence, read N- to C-terminus: MRVRKRKGAEEHLANHPQYVILEPEAAKGKWHQIFGNDNPIHIEVGSGKGAFITGMAQQNPDINYIGIDIQLSVLSYALDKVLASGVENVKLLRVDGSALTNYFEDGEVDMMYLNFSDPWPKSRHEKRRLTYKTFLDTYKQILPKNGEIHLKTDNRGFFEYSLTSFSQYGMILNKVWLDLHASDYEGNVMTEYERKFSEKGQAIYRVEAQFKD.

Positions 44, 69, 96, and 118 each coordinate S-adenosyl-L-methionine. Asp-118 is a catalytic residue. Lys-122 is a binding site for substrate. The interaction with RNA stretch occupies residues Arg-124–Arg-129. Residues Asp-154 and Thr-191 to Glu-194 each bind substrate.

The protein belongs to the class I-like SAM-binding methyltransferase superfamily. TrmB family.

The catalysed reaction is guanosine(46) in tRNA + S-adenosyl-L-methionine = N(7)-methylguanosine(46) in tRNA + S-adenosyl-L-homocysteine. It functions in the pathway tRNA modification; N(7)-methylguanine-tRNA biosynthesis. Catalyzes the formation of N(7)-methylguanine at position 46 (m7G46) in tRNA. The polypeptide is tRNA (guanine-N(7)-)-methyltransferase (Streptococcus thermophilus (strain CNRZ 1066)).